A 169-amino-acid polypeptide reads, in one-letter code: Heat shock protein beta-7 (169 aa).

A disordered region spans residues 1–37; it reads MSHRTSSAFRAERSFRSSSSSSSSSSSSASRALPAQD. Positions 1-70 are required for localization to SC35 splicing speckles; it reads MSHRTSSAFR…PLAFPARPGG (70 aa). Residues 16 to 32 show a composition bias toward low complexity; sequence RSSSSSSSSSSSSASRA. One can recognise a sHSP domain in the interval 61–169; it reads PLAFPARPGG…QQTFRTEIKI (109 aa).

Belongs to the small heat shock protein (HSP20) family. As to quaternary structure, interacts with C-terminal domain of actin-binding protein 280. As to expression, found in both cardiac and slow skeletal (soleus) muscle.

It localises to the cytoplasm. Its subcellular location is the nucleus. It is found in the cajal body. This is Heat shock protein beta-7 (Hspb7) from Mus musculus (Mouse).